We begin with the raw amino-acid sequence, 554 residues long: Valerianol synthase TPS1F (554 aa).

Positions 307 and 311 each coordinate Mg(2+). Positions 326–330 (VQRWD) match the DDXXD motif motif. 3 residues coordinate Mg(2+): Asp452, Ser456, and Glu460.

This sequence belongs to the terpene synthase family. It depends on Mg(2+) as a cofactor.

It catalyses the reaction (2E,6E)-farnesyl diphosphate + H2O = valerianol + diphosphate. Its pathway is secondary metabolite biosynthesis; terpenoid biosynthesis. Terpene synthase that catalyzes the biosynthesis of the terpene valerianol, which is a volatile compound of floral scent. This is Valerianol synthase TPS1F from Camellia hiemalis (Camellia).